The primary structure comprises 425 residues: 2-methylserine hydroxymethyltransferase (425 aa).

Residues Leu126 and 130–132 (GHL) contribute to the (6S)-5,6,7,8-tetrahydrofolate site. Lys235 is modified (N6-(pyridoxal phosphate)lysine). Glu251 contributes to the (6S)-5,6,7,8-tetrahydrofolate binding site.

Belongs to the SHMT family. Homodimer. It depends on pyridoxal 5'-phosphate as a cofactor.

It is found in the cytoplasm. It carries out the reaction (6R)-5,10-methylene-5,6,7,8-tetrahydrofolate + D-alanine + H2O = 2-methylserine + (6S)-5,6,7,8-tetrahydrofolate. The protein operates within one-carbon metabolism; tetrahydrofolate interconversion. Catalyzes the reversible interconversion of alpha-methyl-L-serine to D-alanine with tetrahydrofolate (THF) serving as the one-carbon carrier. Cannot use alpha-methyl-D-serine, L-serine, D-serine or L-alanine. In Ensifer sp, this protein is 2-methylserine hydroxymethyltransferase.